The chain runs to 383 residues: D-aspartate oxidase 3 (383 aa).

Positions methionine 1–serine 17 are cleaved as a signal peptide. FAD-binding residues include lysine 56 and serine 63. Asparagine 152, asparagine 271, and asparagine 320 each carry an N-linked (GlcNAc...) asparagine glycan. Threonine 339 provides a ligand contact to FAD. A glycan (N-linked (GlcNAc...) asparagine) is linked at asparagine 371.

The protein belongs to the DAMOX/DASOX family. It depends on FAD as a cofactor. As to expression, in both sexes, present in coelomocytes (at protein level). Expressed in hypodermal cells and the proximal gonadal sheath cells in adult hermaphrodites (at protein level). Also expressed in probable head mesodermal cells and unidentified cells in the head, and vulval muscles in adult hermaphrodites. Expressed in the seminal vesicle, spicule and tail cells in adult males (at protein level).

It localises to the secreted. The catalysed reaction is D-aspartate + O2 + H2O = oxaloacetate + H2O2 + NH4(+). It carries out the reaction D-glutamate + O2 + H2O = H2O2 + 2-oxoglutarate + NH4(+). Its function is as follows. Selectively catalyzes the oxidative deamination of acidic amino acids. Plays a role in the egg-laying events and maturation processes of the reproductive organs. The protein is D-aspartate oxidase 3 (ddo-3) of Caenorhabditis elegans.